A 234-amino-acid chain; its full sequence is Ribosome-inactivating protein lychnin (234 aa).

Cys-32 and Cys-115 are disulfide-bonded. The active site involves Glu-170.

In terms of assembly, monomer.

It catalyses the reaction Endohydrolysis of the N-glycosidic bond at one specific adenosine on the 28S rRNA.. In terms of biological role, ribosome-inactivating protein of type 1, inhibits protein synthesis in animal cells. Inhibits cell-free translation in rabbit reticulocyte lysate system with an IC(50) of 0.17 nM. The protein is Ribosome-inactivating protein lychnin of Silene chalcedonica (Maltese-cross).